The following is a 238-amino-acid chain: Ribonuclease PH (238 aa).

Phosphate contacts are provided by residues Arg86 and 124–126 (GTR).

This sequence belongs to the RNase PH family. Homohexameric ring arranged as a trimer of dimers.

The enzyme catalyses tRNA(n+1) + phosphate = tRNA(n) + a ribonucleoside 5'-diphosphate. Its function is as follows. Phosphorolytic 3'-5' exoribonuclease that plays an important role in tRNA 3'-end maturation. Removes nucleotide residues following the 3'-CCA terminus of tRNAs; can also add nucleotides to the ends of RNA molecules by using nucleoside diphosphates as substrates, but this may not be physiologically important. Probably plays a role in initiation of 16S rRNA degradation (leading to ribosome degradation) during starvation. The sequence is that of Ribonuclease PH from Vibrio cholerae serotype O1 (strain ATCC 39315 / El Tor Inaba N16961).